The chain runs to 423 residues: Glutamate--cysteine ligase EgtA (423 aa).

Belongs to the glutamate--cysteine ligase type 2 family. EgtA subfamily.

It carries out the reaction L-cysteine + L-glutamate + ATP = gamma-L-glutamyl-L-cysteine + ADP + phosphate + H(+). It participates in amino-acid biosynthesis; ergothioneine biosynthesis. Functionally, catalyzes the synthesis of gamma-glutamylcysteine (gamma-GC). This compound is used as substrate for the biosynthesis of the low-molecular thiol compound ergothioneine. The protein is Glutamate--cysteine ligase EgtA of Mycolicibacterium smegmatis (strain ATCC 700084 / mc(2)155) (Mycobacterium smegmatis).